The chain runs to 330 residues: Peroxisomal membrane protein PEX13 (330 aa).

The span at 1–14 shows a compositional bias: pro residues; sequence MSAPPTNQPPPLPP. Positions 1 to 20 are disordered; sequence MSAPPTNQPPPLPPRSFDNQ. Residues 193–213 traverse the membrane as a helical segment; that stretch reads ASVNWPAALFWVVAIGGPWLI. The SH3 domain maps to 235-300; the sequence is APHYTAQALF…PINYVRIVGK (66 aa).

The protein belongs to the peroxin-13 family. Interacts with PEX14/prx-14; forming the PEX13-PEX14 docking complex.

The protein localises to the peroxisome membrane. Its function is as follows. Component of the PEX13-PEX14 docking complex, a translocon channel that specifically mediates the import of peroxisomal cargo proteins bound to PEX5/prx-5 receptor. The PEX13-PEX14 docking complex forms a large import pore which can be opened to a diameter of about 9 nm. Mechanistically, PEX5/prx-5 receptor along with cargo proteins associates with the PEX14/prx-14 subunit of the PEX13-PEX14 docking complex in the cytosol, leading to the insertion of the receptor into the organelle membrane with the concomitant translocation of the cargo into the peroxisome matrix. The protein is Peroxisomal membrane protein PEX13 (prx-13) of Caenorhabditis elegans.